The sequence spans 82 residues: MVTIRLARHGAKKRPFYQVVVADSRNARNGRFIERVGFFNPIASEKEEGTRLDLDRIAHWVGQGATISDRVAALIKEVNKAA.

Belongs to the bacterial ribosomal protein bS16 family.

This chain is Small ribosomal subunit protein bS16, found in Shigella boydii serotype 18 (strain CDC 3083-94 / BS512).